Consider the following 186-residue polypeptide: HTH-type transcriptional regulator Hpr (186 aa).

One can recognise an HTH marR-type domain in the interval 13 to 157 (AMLYSQRIAQ…VMAVIRNIYG (145 aa)). A DNA-binding region (H-T-H motif) is located at residues 63–86 (ISDVAKFGVMHVSTAFNFSKKLEE).

Homodimer.

Functionally, negative regulator of protease production and sporulation. This Lysinibacillus sphaericus (strain C3-41) protein is HTH-type transcriptional regulator Hpr.